The primary structure comprises 147 residues: Transthyretin (147 aa).

The signal sequence occupies residues 1 to 20; it reads MASHRLLLLCLAGLVFVSEA. A Sulfocysteine modification is found at Cys30. Lys35 is a binding site for L-thyroxine. Position 62 is a 4-carboxyglutamate (Glu62). At Ser72 the chain carries Phosphoserine. Glu74 contributes to the L-thyroxine binding site. N-linked (GlcNAc...) asparagine glycosylation occurs at Asn118. An L-thyroxine-binding site is contributed by Ser137.

The protein belongs to the transthyretin family. Homotetramer. Dimer of dimers. In the homotetramer, subunits assemble around a central channel that can accommodate two ligand molecules. Interacts with RBP4. Post-translationally, sulfonation of the reactive cysteine Cys-30 enhances the stability of the native conformation of TTR, avoiding misassembly of the protein leading to amyloid formation. In terms of tissue distribution, detected in liver.

The protein resides in the secreted. In terms of biological role, thyroid hormone-binding protein. Probably transports thyroxine from the bloodstream to the brain. This is Transthyretin (TTR) from Pongo abelii (Sumatran orangutan).